A 493-amino-acid polypeptide reads, in one-letter code: Chromosomal replication initiator protein DnaA (493 aa).

The domain I, interacts with DnaA modulators stretch occupies residues Met1–Ser105. The interval Ser105–Ser152 is domain II. The tract at residues Ala121 to Arg140 is disordered. The segment at Asn153–His370 is domain III, AAA+ region. ATP-binding residues include Gly198, Gly200, Lys201, and Thr202. The interval Ser371–Met493 is domain IV, binds dsDNA.

This sequence belongs to the DnaA family. Oligomerizes as a right-handed, spiral filament on DNA at oriC.

It localises to the cytoplasm. Plays an essential role in the initiation and regulation of chromosomal replication. ATP-DnaA binds to the origin of replication (oriC) to initiate formation of the DNA replication initiation complex once per cell cycle. Binds the DnaA box (a 9 base pair repeat at the origin) and separates the double-stranded (ds)DNA. Forms a right-handed helical filament on oriC DNA; dsDNA binds to the exterior of the filament while single-stranded (ss)DNA is stabiized in the filament's interior. The ATP-DnaA-oriC complex binds and stabilizes one strand of the AT-rich DNA unwinding element (DUE), permitting loading of DNA polymerase. After initiation quickly degrades to an ADP-DnaA complex that is not apt for DNA replication. Binds acidic phospholipids. The protein is Chromosomal replication initiator protein DnaA of Chlorobaculum tepidum (strain ATCC 49652 / DSM 12025 / NBRC 103806 / TLS) (Chlorobium tepidum).